The following is a 663-amino-acid chain: DNA ligase (663 aa).

NAD(+)-binding positions include 33-37, 82-83, and Glu113; these read DQEFD and SL. Lys115 serves as the catalytic N6-AMP-lysine intermediate. NAD(+) contacts are provided by Arg136, Glu170, Lys286, and Lys310. Residues Cys404, Cys407, Cys422, and Cys427 each contribute to the Zn(2+) site. Residues 587–663 form the BRCT domain; sequence SSDPSLTGKL…IEESDLEDFL (77 aa).

The protein belongs to the NAD-dependent DNA ligase family. LigA subfamily. Mg(2+) serves as cofactor. Requires Mn(2+) as cofactor.

The catalysed reaction is NAD(+) + (deoxyribonucleotide)n-3'-hydroxyl + 5'-phospho-(deoxyribonucleotide)m = (deoxyribonucleotide)n+m + AMP + beta-nicotinamide D-nucleotide.. Functionally, DNA ligase that catalyzes the formation of phosphodiester linkages between 5'-phosphoryl and 3'-hydroxyl groups in double-stranded DNA using NAD as a coenzyme and as the energy source for the reaction. It is essential for DNA replication and repair of damaged DNA. The protein is DNA ligase of Natranaerobius thermophilus (strain ATCC BAA-1301 / DSM 18059 / JW/NM-WN-LF).